We begin with the raw amino-acid sequence, 112 residues long: MKVLVVLLVTLVAVAYAAPGPRGLFINLEDGEICVNSMQCKSRCCQHDTILGIARCTHKAMENSECSPKTLYGIYYRCPCERGLTCEGDRSIIGAITNTNYGVCLDSTRSKQ.

Positions Met-1–Ala-17 are cleaved as a signal peptide. The propeptide at Ala-18–Arg-22 is enterostatin, activation peptide. Disulfide bonds link Cys-34/Cys-45, Cys-40/Cys-56, Cys-44/Cys-78, Cys-66/Cys-86, and Cys-80/Cys-104.

The protein belongs to the colipase family. As to quaternary structure, forms a 1:1 stoichiometric complex with pancreatic lipase. As to expression, expressed by the pancreas.

It localises to the secreted. Functionally, colipase is a cofactor of pancreatic lipase. It allows the lipase to anchor itself to the lipid-water interface. Without colipase the enzyme is washed off by bile salts, which have an inhibitory effect on the lipase. In terms of biological role, enterostatin has a biological activity as a satiety signal. This is Colipase from Rattus norvegicus (Rat).